Here is a 395-residue protein sequence, read N- to C-terminus: Chalcone synthase 7 (395 aa).

C169 is a catalytic residue.

It belongs to the thiolase-like superfamily. Chalcone/stilbene synthases family.

The catalysed reaction is (E)-4-coumaroyl-CoA + 3 malonyl-CoA + 3 H(+) = 2',4,4',6'-tetrahydroxychalcone + 3 CO2 + 4 CoA. It participates in secondary metabolite biosynthesis; flavonoid biosynthesis. The primary product of this enzyme is 4,2',4',6'-tetrahydroxychalcone (also termed naringenin-chalcone or chalcone) which can under specific conditions spontaneously isomerize into naringenin. The protein is Chalcone synthase 7 (CSF7) of Picea mariana (Black spruce).